The chain runs to 158 residues: Transcriptional regulator MraZ (158 aa).

2 SpoVT-AbrB domains span residues 7–54 and 84–127; these read NIEA…PEEV and VEII…AKER.

The protein belongs to the MraZ family. Forms oligomers.

The protein localises to the cytoplasm. It is found in the nucleoid. In Bacteroides fragilis (strain ATCC 25285 / DSM 2151 / CCUG 4856 / JCM 11019 / LMG 10263 / NCTC 9343 / Onslow / VPI 2553 / EN-2), this protein is Transcriptional regulator MraZ.